Consider the following 128-residue polypeptide: Orchestin (128 aa).

A signal peptide spans 1–20 (MNKVFIIGVCLFIVSQAVLA). Residues 23-95 (WDSDESSDER…DEDSDDSQES (73 aa)) form a disordered region. Composition is skewed to basic and acidic residues over residues 30–49 (DERL…KLVV) and 56–81 (EDSN…RKLS). The span at 84 to 93 (TSDEDSDDSQ) shows a compositional bias: acidic residues.

Post-translationally, phosphorylated on Ser and Tyr residues. Calcium-binding activity is dependent on serine phosphorylation but not on tyrosine phosphorylation. In terms of tissue distribution, posterior caeca epithelium of the gut.

It localises to the secreted. In terms of biological role, plays a role in cuticle calcification. May induce precipitation of the calcium stored in the posterior caeca as calcium carbonate. This Cryptorchestia cavimana (Amphipod) protein is Orchestin.